The sequence spans 185 residues: MLDEIYKNQKAFSDKALEVLKRDFTTLRTGKVNINIVDHINVDYYGSPTALNQVATVLATDASTISISPWEKTMLKAISSAIQAANIGVNPNNDGDSVKLFFPPMTTEDRQKNAKEARSMGEKAKVAIRNIRKDANDDIKKIEKDKSVSEDEIKKGYDEVQKITDSYISKIDQLVKDKEAELLKV.

Belongs to the RRF family.

Its subcellular location is the cytoplasm. Responsible for the release of ribosomes from messenger RNA at the termination of protein biosynthesis. May increase the efficiency of translation by recycling ribosomes from one round of translation to another. This chain is Ribosome-recycling factor, found in Campylobacter fetus subsp. fetus (strain 82-40).